Reading from the N-terminus, the 480-residue chain is Aspartyl/glutamyl-tRNA(Asn/Gln) amidotransferase subunit B (480 aa).

The protein belongs to the GatB/GatE family. GatB subfamily. Heterotrimer of A, B and C subunits.

It catalyses the reaction L-glutamyl-tRNA(Gln) + L-glutamine + ATP + H2O = L-glutaminyl-tRNA(Gln) + L-glutamate + ADP + phosphate + H(+). The catalysed reaction is L-aspartyl-tRNA(Asn) + L-glutamine + ATP + H2O = L-asparaginyl-tRNA(Asn) + L-glutamate + ADP + phosphate + 2 H(+). Allows the formation of correctly charged Asn-tRNA(Asn) or Gln-tRNA(Gln) through the transamidation of misacylated Asp-tRNA(Asn) or Glu-tRNA(Gln) in organisms which lack either or both of asparaginyl-tRNA or glutaminyl-tRNA synthetases. The reaction takes place in the presence of glutamine and ATP through an activated phospho-Asp-tRNA(Asn) or phospho-Glu-tRNA(Gln). In Streptococcus pneumoniae (strain ATCC 700669 / Spain 23F-1), this protein is Aspartyl/glutamyl-tRNA(Asn/Gln) amidotransferase subunit B.